Here is a 1460-residue protein sequence, read N- to C-terminus: Centrosomal protein of 164 kDa (1460 aa).

The interaction with ATRIP stretch occupies residues 1–194; the sequence is MAGRPLRIGD…PSQGLKTSAY (194 aa). Residues 56 to 89 form the WW domain; sequence APLPGEWKPCQDITGDIYYFNFANGQSMWDHPCD. Residues 107-135 are disordered; sequence GAIKKKKKKKEKKDKKDRDPPKSSLALGS. Positions 109–119 are enriched in basic residues; sequence IKKKKKKKEKK. Ser-186 bears the Phosphoserine; by ATR and ATM mark. A Phosphoserine modification is found at Ser-201. Disordered stretches follow at residues 213-412, 440-593, and 658-719; these read GLGE…HGLD, AQQP…AALK, and EEAR…QKNR. Over residues 217–227 the composition is skewed to acidic residues; that stretch reads ETNEEDEEESD. Over residues 256 to 270 the composition is skewed to basic and acidic residues; sequence ESLRTSQPEEKKDVS. Low complexity predominate over residues 285-296; sequence SSPGADSSLSSA. Basic and acidic residues-rich tracts occupy residues 310 to 323 and 357 to 367; these read LPEK…EPKI and EGSRREEAAKE. Positions 453 to 464 are enriched in low complexity; sequence QSSQDELQSKQS. Residues 465 to 481 show a composition bias toward basic and acidic residues; it reads KGLEERLSPPLPHEERA. The span at 514–525 shows a compositional bias: low complexity; the sequence is SAASLSLQLSLQ. Residues 537–546 show a composition bias toward basic and acidic residues; it reads EKGKEQHSQA. Phosphoserine is present on Ser-566. Basic and acidic residues-rich tracts occupy residues 658 to 668 and 686 to 719; these read EEARMREEESQ and DQIR…QKNR. A coiled-coil region spans residues 1154–1206; that stretch reads GIKALEDMRKNLEKETRHLDEMKSAMRKGHNLLKKKEEKLNQLESSLWEEASD. Residues 1290–1310 are disordered; sequence PPPLLASMPAQLPPRDPKSTP. Ser-1386, Ser-1388, and Ser-1443 each carry phosphoserine.

In terms of assembly, interacts (via N-terminus) with ATRIP. Interacts with ATM, ATR and MDC1. Interacts with XPA (via N-terminus) upon UV irradiation. Interacts with CEP83, CCDC92, TTBK2, DVL3, NPHP3 and weakly with NPHP4. Interacts with DZIP1. Phosphorylation at Ser-186 is induced upon DNA-damage caused by treatment with IR irradiation, UV irradiation, hydroxyurea or amphidicolin. Also MDC1-mediated chromatin remodeling is critical for DNA damage-induced phosphorylation. In terms of tissue distribution, expressed in several cell lines.

The protein localises to the cytoplasm. It localises to the cytoskeleton. The protein resides in the microtubule organizing center. It is found in the centrosome. Its subcellular location is the centriole. The protein localises to the nucleus. In terms of biological role, plays a role in microtubule organization and/or maintenance for the formation of primary cilia (PC), a microtubule-based structure that protrudes from the surface of epithelial cells. Plays a critical role in G2/M checkpoint and nuclear divisions. A key player in the DNA damage-activated ATR/ATM signaling cascade since it is required for the proper phosphorylation of H2AX, RPA, CHEK2 and CHEK1. Plays a critical role in chromosome segregation, acting as a mediator required for the maintenance of genomic stability through modulation of MDC1, RPA and CHEK1. The polypeptide is Centrosomal protein of 164 kDa (CEP164) (Homo sapiens (Human)).